The sequence spans 86 residues: Anti-adapter protein IraP (86 aa).

Positions M1–M36 form a coiled coil.

Belongs to the IraP family. Interacts with RssB.

It localises to the cytoplasm. Functionally, inhibits RpoS proteolysis by regulating RssB activity, thereby increasing the stability of the sigma stress factor RpoS especially during phosphate starvation, but also in stationary phase and during nitrogen starvation. Its effect on RpoS stability is due to its interaction with RssB, which probably blocks the interaction of RssB with RpoS, and the consequent delivery of the RssB-RpoS complex to the ClpXP protein degradation pathway. This chain is Anti-adapter protein IraP, found in Citrobacter koseri (strain ATCC BAA-895 / CDC 4225-83 / SGSC4696).